Reading from the N-terminus, the 269-residue chain is LOB domain-containing protein 6 (269 aa).

The region spanning 37-138 (SPCAACKFLR…QDLARAKFEL (102 aa)) is the LOB domain.

This sequence belongs to the LOB domain-containing protein family.

The protein localises to the nucleus. In terms of biological role, negative regulator of cell proliferation in the adaxial side of leaves. Regulates the formation of a symmetric lamina and the establishment of venation. The protein is LOB domain-containing protein 6 (LBD6) of Oryza sativa subsp. indica (Rice).